The primary structure comprises 200 residues: BREX protein BrxB (200 aa).

The protein belongs to the BrxB family.

BREX systems (bacteriophage exclusion) provide immunity against bacteriophage. Part of a type 1 BREX system which protects against dsDNA phage. This system allows phage adsorption but prevents phage DNA replication, without degradation of the phage DNA. Methylation of bacterial DNA by PglX guides self/non-self discrimination. When the brxA-brxB-brxC-pglX-pglZ-brxL genes are transformed into a susceptible E.coli strain (BW25113) they confer very high resistance to infection by bacteriophage VR7 and VpaE1, about 100-fold protection against lambda, T5 and T7 and no protection against RNA phage Qbeta, ssDNA phage M13 or dSDNA phage T4 and VR5. Glycosylated phage DNA is not susceptible to BREX. The BREX system does not confer resistance to lysogenic lambda phage, i.e. prophage that are integrated into the chromosomal DNA and then induced to form phage. This is BREX protein BrxB from Escherichia coli O9:H4 (strain HS).